Consider the following 251-residue polypeptide: Methylthioribulose-1-phosphate dehydratase (251 aa).

The segment at 1 to 26 is disordered; sequence MTSVCDATNEDKENGSESTESQDKEH. The span at 9–26 shows a compositional bias: basic and acidic residues; the sequence is NEDKENGSESTESQDKEH. Cys-100 contacts substrate. Residues His-118 and His-120 each contribute to the Zn(2+) site. Glu-142 acts as the Proton donor/acceptor in catalysis. His-198 is a Zn(2+) binding site. A disordered region spans residues 232-251; the sequence is MDPSAPPIEENHYYDVQQSQ.

Belongs to the aldolase class II family. MtnB subfamily. Zn(2+) is required as a cofactor.

It localises to the cytoplasm. It carries out the reaction 5-(methylsulfanyl)-D-ribulose 1-phosphate = 5-methylsulfanyl-2,3-dioxopentyl phosphate + H2O. It participates in amino-acid biosynthesis; L-methionine biosynthesis via salvage pathway; L-methionine from S-methyl-5-thio-alpha-D-ribose 1-phosphate: step 2/6. Catalyzes the dehydration of methylthioribulose-1-phosphate (MTRu-1-P) into 2,3-diketo-5-methylthiopentyl-1-phosphate (DK-MTP-1-P). Functions in the methionine salvage pathway. May play a role in apoptosis. The polypeptide is Methylthioribulose-1-phosphate dehydratase (Salmo salar (Atlantic salmon)).